The chain runs to 118 residues: Protein TusC (118 aa).

This sequence belongs to the DsrF/TusC family. Heterohexamer, formed by a dimer of trimers. The hexameric TusBCD complex contains 2 copies each of TusB, TusC and TusD. The TusBCD complex interacts with TusE.

The protein localises to the cytoplasm. Its function is as follows. Part of a sulfur-relay system required for 2-thiolation of 5-methylaminomethyl-2-thiouridine (mnm(5)s(2)U) at tRNA wobble positions. This Salmonella agona (strain SL483) protein is Protein TusC.